A 344-amino-acid chain; its full sequence is Thioredoxin reductase FGSG_00043 (344 aa).

FAD-binding positions include 12-15, 34-39, His51, and Ala121; these read GGPA and DSVSYR. Cysteines 165 and 168 form a disulfide. FAD is bound by residues Asp314 and 321–322; that span reads FV.

The protein belongs to the class-II pyridine nucleotide-disulfide oxidoreductase family. Homodimer. FAD serves as cofactor.

The protein operates within mycotoxin biosynthesis. Its function is as follows. Thioredoxin reductase; part of the gene cluster that mediates the biosynthesis of gramillins A and B, bicyclic lipopeptides that induce cell death in maize leaves but not in wheat leaves. The nonribosomal peptide synthetase GRA1 incorporates respectively a glutamic adic (Glu), a leucine (Leu), a serine (Ser), a hydroxyglutamine (HOGln), a 2-amino decanoic acid, and 2 cysteins (CysB and CysA). The biosynthesis of 2-amino decanoic acid incorporated in gramillins could be initiated by a fatty acid synthase composed of the alpha and beta subunits FGSG_00036 and FGSG_11656. The cytochrome P450 monooxygenase FGSG_15680 could hydroxylate the fatty acid chain. Subsequent oxidation to the ketone by the oxidoreductase FGSG_00048 and transamination by aminotransferase FGSG_00049 could form 2-amino-decanoic acid. On the other hand, FGSG_15680 could also be responsible for the HO-modified glutamine at the gamma-position. Whether hydroxylation occurs on the fully assembled product or on the Gln residue prior to assembly into the gramillins requires further proof. The thioredoxin FGSG_00043 could also be required for the disulfide-bond formation between CysA and CysB. The specific involvement of the remaining proteins from the cluster is more difficult to discern, but could have broader regulatory (FGSG_00040 and FGSG_11657) or enzymatic functions (FGSG_00044 and FGSG_00045). The final C-domain of GRA1 does not possess the expected sequence of a termination CT domain, often implicated in macrocyclization and release of a cyclopeptidein fungal NRPs; and the thioesterase FGSG_00047 may act in concert with the terminal C-domain of GRA1 to catalyze the formation of the macrocyclic anhydride and release of the products. This is Thioredoxin reductase FGSG_00043 from Gibberella zeae (strain ATCC MYA-4620 / CBS 123657 / FGSC 9075 / NRRL 31084 / PH-1) (Wheat head blight fungus).